Here is a 148-residue protein sequence, read N- to C-terminus: uncharacterized protein (148 aa).

Basic and acidic residues predominate over residues 97–112 (KKLDEQRMPGKPKNTE). Positions 97–126 (KKLDEQRMPGKPKNTEGSKSTIRKKANVGN) are disordered.

This is an uncharacterized protein from Caenorhabditis elegans.